Reading from the N-terminus, the 642-residue chain is Extracellular metalloproteinase 4 (642 aa).

The N-terminal stretch at 1–18 is a signal peptide; it reads MHGLLLAGLLALPLNVLA. Positions 19–253 are excised as a propeptide; that stretch reads HPTESHSSGI…VHSVVDYVSA (235 aa). A compositionally biased stretch (polar residues) spans 49-60; it reads SDSLTGQDGQSF. The disordered stretch occupies residues 49–72; sequence SDSLTGQDGQSFTASSADADTSSG. Residues 61-71 show a composition bias toward low complexity; it reads TASSADADTSS. A glycan (N-linked (GlcNAc...) asparagine) is linked at Asn-419. His-436 serves as a coordination point for Zn(2+). The active site involves Glu-437. Residue His-440 participates in Zn(2+) binding. 2 N-linked (GlcNAc...) asparagine glycosylation sites follow: Asn-509 and Asn-602.

It belongs to the peptidase M36 family. Zn(2+) is required as a cofactor.

It is found in the secreted. Functionally, secreted metalloproteinase that allows assimilation of proteinaceous substrates and probably acts as a virulence factor. The chain is Extracellular metalloproteinase 4 (MEP4) from Arthroderma gypseum (strain ATCC MYA-4604 / CBS 118893) (Microsporum gypseum).